Consider the following 500-residue polypeptide: Allene oxide synthase 3 (500 aa).

Positions 1–26 (MAPPPVNSGDAAAAATGEKSKLSPSG) are disordered. Substrate-binding positions include 297-298 (FN), K304, and 365-368 (PVEF). A heme-binding site is contributed by C452.

It belongs to the cytochrome P450 family. Requires heme as cofactor. Not expressed in dark-grown seedlings.

It catalyses the reaction (13S)-hydroperoxy-(9Z,11E,15Z)-octadecatrienoate = (9Z,13S,15Z)-12,13-epoxyoctadeca-9,11,15-trienoate + H2O. The protein operates within lipid metabolism; oxylipin biosynthesis. In terms of biological role, involved in the biosynthesis of jasmonic acid, a growth regulator that is implicated also as a signaling molecule in plant defense. Converts 13-hydroperoxylinolenic acid to 12,13-epoxylinolenic acid. The chain is Allene oxide synthase 3 (CYP74A3) from Oryza sativa subsp. japonica (Rice).